Here is a 516-residue protein sequence, read N- to C-terminus: Bifunctional purine biosynthesis protein PurH (516 aa).

The 146-residue stretch at 1-146 (MTRLALLSVS…KNYAHVTVLS (146 aa)) folds into the MGS-like domain.

The protein belongs to the PurH family.

It catalyses the reaction (6R)-10-formyltetrahydrofolate + 5-amino-1-(5-phospho-beta-D-ribosyl)imidazole-4-carboxamide = 5-formamido-1-(5-phospho-D-ribosyl)imidazole-4-carboxamide + (6S)-5,6,7,8-tetrahydrofolate. It carries out the reaction IMP + H2O = 5-formamido-1-(5-phospho-D-ribosyl)imidazole-4-carboxamide. Its pathway is purine metabolism; IMP biosynthesis via de novo pathway; 5-formamido-1-(5-phospho-D-ribosyl)imidazole-4-carboxamide from 5-amino-1-(5-phospho-D-ribosyl)imidazole-4-carboxamide (10-formyl THF route): step 1/1. It participates in purine metabolism; IMP biosynthesis via de novo pathway; IMP from 5-formamido-1-(5-phospho-D-ribosyl)imidazole-4-carboxamide: step 1/1. The polypeptide is Bifunctional purine biosynthesis protein PurH (Rippkaea orientalis (strain PCC 8801 / RF-1) (Cyanothece sp. (strain PCC 8801))).